Reading from the N-terminus, the 188-residue chain is Ribosome-recycling factor (188 aa).

It belongs to the RRF family.

The protein localises to the cytoplasm. In terms of biological role, responsible for the release of ribosomes from messenger RNA at the termination of protein biosynthesis. May increase the efficiency of translation by recycling ribosomes from one round of translation to another. This is Ribosome-recycling factor from Caulobacter vibrioides (strain NA1000 / CB15N) (Caulobacter crescentus).